A 374-amino-acid chain; its full sequence is Calcium/calmodulin-dependent protein kinase type 1 (374 aa).

Positions 20-276 (YDFRDVLGTG…CEQALQHPWI (257 aa)) constitute a Protein kinase domain. Residues 26–34 (LGTGAFSEV) and Lys49 contribute to the ATP site. Residue Lys59 forms a Glycyl lysine isopeptide (Lys-Gly) (interchain with G-Cter in ubiquitin) linkage. Asp141 (proton acceptor) is an active-site residue. At Thr177 the chain carries Phosphothreonine; by CaMKK1 and CaMKK2. Positions 276-316 (IAGDTALDKNIHQSVSEQIKKNFAKSKWKQAFNATAVVRHM) are autoinhibitory domain. The calmodulin-binding stretch occupies residues 296–317 (KNFAKSKWKQAFNATAVVRHMR). The Nuclear export signal motif lies at 315–321 (HMRKLQL).

This sequence belongs to the protein kinase superfamily. CAMK Ser/Thr protein kinase family. CaMK subfamily. Monomer. Interacts with XPO1. Phosphorylated by CaMKK1 and CaMKK2 on Thr-177. In terms of processing, polybiquitinated by the E3 ubiquitin-protein ligase complex SCF(FBXL12), leading to proteasomal degradation. Ubiquitous.

The protein localises to the cytoplasm. Its subcellular location is the nucleus. The enzyme catalyses L-seryl-[protein] + ATP = O-phospho-L-seryl-[protein] + ADP + H(+). It catalyses the reaction L-threonyl-[protein] + ATP = O-phospho-L-threonyl-[protein] + ADP + H(+). With respect to regulation, activated by Ca(2+)/calmodulin. Binding of calmodulin results in conformational change that relieves intrasteric autoinhibition and allows phosphorylation of Thr-177 within the activation loop by CaMKK1 or CaMKK2. Phosphorylation of Thr-177 results in several fold increase in total activity. Unlike CaMK4, is unable to exhibit autonomous activity after Ca(2+)/calmodulin activation. Its function is as follows. Calcium/calmodulin-dependent protein kinase that operates in the calcium-triggered CaMKK-CaMK1 signaling cascade and, upon calcium influx, regulates transcription activators activity, cell cycle, hormone production, cell differentiation, actin filament organization and neurite outgrowth. Recognizes the substrate consensus sequence [MVLIF]-x-R-x(2)-[ST]-x(3)-[MVLIF]. Regulates axonal extension and growth cone motility in hippocampal and cerebellar nerve cells. Upon NMDA receptor-mediated Ca(2+) elevation, promotes dendritic growth in hippocampal neurons and is essential in synapses for full long-term potentiation (LTP) and ERK2-dependent translational activation. Downstream of NMDA receptors, promotes the formation of spines and synapses in hippocampal neurons by phosphorylating ARHGEF7/BETAPIX on 'Ser-673', which results in the enhancement of ARHGEF7 activity and activation of RAC1. Promotes neuronal differentiation and neurite outgrowth by activation and phosphorylation of MARK2 on 'Ser-91', 'Ser-92', 'Ser-93' and 'Ser-294'. Promotes nuclear export of HDAC5 and binding to 14-3-3 by phosphorylation of 'Ser-259' and 'Ser-498' in the regulation of muscle cell differentiation. Regulates NUMB-mediated endocytosis by phosphorylation of NUMB on 'Ser-276' and 'Ser-295'. Involved in the regulation of basal and estrogen-stimulated migration of medulloblastoma cells through ARHGEF7/BETAPIX phosphorylation. Is required for proper activation of cyclin-D1/CDK4 complex during G1 progression in diploid fibroblasts. Plays a role in K(+) and ANG2-mediated regulation of the aldosterone synthase (CYP11B2) to produce aldosterone in the adrenal cortex. Phosphorylates EIF4G3/eIF4GII. In vitro phosphorylates CREB1, ATF1, CFTR, MYL9 and SYN1/synapsin I. The protein is Calcium/calmodulin-dependent protein kinase type 1 (Camk1) of Mus musculus (Mouse).